The following is a 447-amino-acid chain: Phosphoglucosamine mutase (447 aa).

Catalysis depends on serine 105, which acts as the Phosphoserine intermediate. 4 residues coordinate Mg(2+): serine 105, aspartate 244, aspartate 246, and aspartate 248. The residue at position 105 (serine 105) is a Phosphoserine.

This sequence belongs to the phosphohexose mutase family. Mg(2+) is required as a cofactor. In terms of processing, activated by phosphorylation.

The catalysed reaction is alpha-D-glucosamine 1-phosphate = D-glucosamine 6-phosphate. In terms of biological role, catalyzes the conversion of glucosamine-6-phosphate to glucosamine-1-phosphate. In Polynucleobacter asymbioticus (strain DSM 18221 / CIP 109841 / QLW-P1DMWA-1) (Polynucleobacter necessarius subsp. asymbioticus), this protein is Phosphoglucosamine mutase.